Consider the following 93-residue polypeptide: UPF0213 protein CPE1444 (93 aa).

Residues 1 to 75 form the GIY-YIG domain; the sequence is MNYVYILKCK…KKLTRNQKLQ (75 aa).

Belongs to the UPF0213 family.

This chain is UPF0213 protein CPE1444, found in Clostridium perfringens (strain 13 / Type A).